We begin with the raw amino-acid sequence, 131 residues long: Peptide methionine sulfoxide reductase MsrB (131 aa).

The 123-residue stretch at 8–130 (LEEWKQMLDP…NSVCLDLVPR (123 aa)) folds into the MsrB domain. Zn(2+)-binding residues include Cys-47, Cys-50, Cys-96, and Cys-99. The active-site Nucleophile is the Cys-119.

This sequence belongs to the MsrB Met sulfoxide reductase family. Requires Zn(2+) as cofactor.

The enzyme catalyses L-methionyl-[protein] + [thioredoxin]-disulfide + H2O = L-methionyl-(R)-S-oxide-[protein] + [thioredoxin]-dithiol. This is Peptide methionine sulfoxide reductase MsrB from Pseudomonas syringae pv. syringae (strain B728a).